Consider the following 216-residue polypeptide: Fibroblast growth factor 17 (216 aa).

Residues 1–22 form the signal peptide; the sequence is MGAARLLPNLTLCLQLLILCCQ. Asn-137 carries N-linked (GlcNAc...) asparagine glycosylation. Residues 195–216 form a disordered region; the sequence is FEFVGSAPTRRTKRTRRPQSQT. The segment covering 204 to 216 has biased composition (basic residues); the sequence is RRTKRTRRPQSQT.

The protein belongs to the heparin-binding growth factors family. Interacts with FGFR3 and FGFR4.

The protein resides in the secreted. Its function is as follows. Plays an important role in the regulation of embryonic development and as signaling molecule in the induction and patterning of the embryonic brain. Required for normal brain development. This is Fibroblast growth factor 17 (Fgf17) from Mus musculus (Mouse).